Here is a 327-residue protein sequence, read N- to C-terminus: Glycerol-3-phosphate dehydrogenase [NAD(P)+] (327 aa).

Residues Trp-11, His-30, and Lys-103 each contribute to the NADPH site. Residues Lys-103, Gly-131, and Ser-133 each contribute to the sn-glycerol 3-phosphate site. Ala-135 serves as a coordination point for NADPH. Residues Lys-186, Asp-243, Ser-253, Arg-254, and Asn-255 each contribute to the sn-glycerol 3-phosphate site. Lys-186 (proton acceptor) is an active-site residue. Arg-254 contributes to the NADPH binding site. Val-281 and Glu-283 together coordinate NADPH.

It belongs to the NAD-dependent glycerol-3-phosphate dehydrogenase family.

Its subcellular location is the cytoplasm. The enzyme catalyses sn-glycerol 3-phosphate + NAD(+) = dihydroxyacetone phosphate + NADH + H(+). It carries out the reaction sn-glycerol 3-phosphate + NADP(+) = dihydroxyacetone phosphate + NADPH + H(+). It participates in membrane lipid metabolism; glycerophospholipid metabolism. Catalyzes the reduction of the glycolytic intermediate dihydroxyacetone phosphate (DHAP) to sn-glycerol 3-phosphate (G3P), the key precursor for phospholipid synthesis. The polypeptide is Glycerol-3-phosphate dehydrogenase [NAD(P)+] (Wolbachia sp. subsp. Brugia malayi (strain TRS)).